The following is a 122-amino-acid chain: Large ribosomal subunit protein uL14 (122 aa).

This sequence belongs to the universal ribosomal protein uL14 family. Part of the 50S ribosomal subunit. Forms a cluster with proteins L3 and L19. In the 70S ribosome, L14 and L19 interact and together make contacts with the 16S rRNA in bridges B5 and B8.

Its function is as follows. Binds to 23S rRNA. Forms part of two intersubunit bridges in the 70S ribosome. This chain is Large ribosomal subunit protein uL14, found in Lysinibacillus sphaericus (strain C3-41).